Consider the following 901-residue polypeptide: HTH-type transcriptional regulator MalT (901 aa).

39–46 (SPAGYGKT) provides a ligand contact to ATP. An HTH luxR-type domain is found at 829 to 894 (ELIRTSPLTQ…DAVQHAQQLL (66 aa)). Residues 853–872 (NEQIAGELAVAATTIKTHIR) constitute a DNA-binding region (H-T-H motif).

Belongs to the MalT family. Monomer in solution. Oligomerizes to an active state in the presence of the positive effectors ATP and maltotriose.

Activated by ATP and maltotriose, which are both required for DNA binding. Positively regulates the transcription of the maltose regulon whose gene products are responsible for uptake and catabolism of malto-oligosaccharides. Specifically binds to the promoter region of its target genes, recognizing a short DNA motif called the MalT box. In Salmonella choleraesuis (strain SC-B67), this protein is HTH-type transcriptional regulator MalT.